Reading from the N-terminus, the 196-residue chain is Large ribosomal subunit protein bL9 (196 aa).

The segment at 174 to 196 (QAAADLLEGGAGQQASEYTEAQA) is disordered. The segment covering 186–196 (QQASEYTEAQA) has biased composition (polar residues).

This sequence belongs to the bacterial ribosomal protein bL9 family.

Binds to the 23S rRNA. This chain is Large ribosomal subunit protein bL9, found in Phenylobacterium zucineum (strain HLK1).